The primary structure comprises 152 residues: Large ribosomal subunit protein bL21 (152 aa).

Residues 115 to 152 are disordered; the sequence is VTSISNGEKPKKATTSAKPNTKKPSTAVKSSKVEKTPE. Positions 127–143 are enriched in polar residues; it reads ATTSAKPNTKKPSTAVK.

This sequence belongs to the bacterial ribosomal protein bL21 family. In terms of assembly, part of the 50S ribosomal subunit. Contacts protein L20.

Functionally, this protein binds to 23S rRNA in the presence of protein L20. The protein is Large ribosomal subunit protein bL21 of Prochlorococcus marinus (strain SARG / CCMP1375 / SS120).